Reading from the N-terminus, the 262-residue chain is Hydroxyethylthiazole kinase (262 aa).

Position 41 (methionine 41) interacts with substrate. Residues arginine 117 and serine 163 each contribute to the ATP site. Glycine 190 serves as a coordination point for substrate.

It belongs to the Thz kinase family. The cofactor is Mg(2+).

It carries out the reaction 5-(2-hydroxyethyl)-4-methylthiazole + ATP = 4-methyl-5-(2-phosphooxyethyl)-thiazole + ADP + H(+). Its pathway is cofactor biosynthesis; thiamine diphosphate biosynthesis; 4-methyl-5-(2-phosphoethyl)-thiazole from 5-(2-hydroxyethyl)-4-methylthiazole: step 1/1. Catalyzes the phosphorylation of the hydroxyl group of 4-methyl-5-beta-hydroxyethylthiazole (THZ). This is Hydroxyethylthiazole kinase from Levilactobacillus brevis (strain ATCC 367 / BCRC 12310 / CIP 105137 / JCM 1170 / LMG 11437 / NCIMB 947 / NCTC 947) (Lactobacillus brevis).